Consider the following 129-residue polypeptide: Small ribosomal subunit protein uS9 (129 aa).

Belongs to the universal ribosomal protein uS9 family.

In Aliarcobacter butzleri (strain RM4018) (Arcobacter butzleri), this protein is Small ribosomal subunit protein uS9.